Reading from the N-terminus, the 277-residue chain is NH(3)-dependent NAD(+) synthetase (277 aa).

36-43 (GLSGGIDS) contributes to the ATP binding site. D42 is a Mg(2+) binding site. R118 contacts deamido-NAD(+). T138 contacts ATP. E143 is a binding site for Mg(2+). ATP-binding residues include K167 and S189.

This sequence belongs to the NAD synthetase family. As to quaternary structure, homodimer.

It carries out the reaction deamido-NAD(+) + NH4(+) + ATP = AMP + diphosphate + NAD(+) + H(+). It participates in cofactor biosynthesis; NAD(+) biosynthesis; NAD(+) from deamido-NAD(+) (ammonia route): step 1/1. Catalyzes the ATP-dependent amidation of deamido-NAD to form NAD. Uses ammonia as a nitrogen source. This is NH(3)-dependent NAD(+) synthetase from Pelodictyon phaeoclathratiforme (strain DSM 5477 / BU-1).